Reading from the N-terminus, the 1088-residue chain is DNA mismatch repair protein MutS (1088 aa).

A disordered region spans residues 498–579 (PLDGITPPDD…SFEMPSLHGH (82 aa)). Positions 537-546 (DLFDEEEEQE) are enriched in acidic residues. 816–823 (GPNMSGKS) contributes to the ATP binding site. Residues 1000 to 1048 (LERRAPRSTPQPAPERTEERPAAGRPTARSHSAARGDPPRAPDGQLSLF) form a disordered region.

The protein belongs to the DNA mismatch repair MutS family.

Functionally, this protein is involved in the repair of mismatches in DNA. It is possible that it carries out the mismatch recognition step. This protein has a weak ATPase activity. The protein is DNA mismatch repair protein MutS of Roseiflexus castenholzii (strain DSM 13941 / HLO8).